Here is a 375-residue protein sequence, read N- to C-terminus: Mitogen-activated protein kinase 1 (375 aa).

One can recognise a Protein kinase domain in the interval 43 to 329 (RPPIMPIGRG…VEEALAHPYL (287 aa)). ATP-binding positions include 49 to 57 (IGRGAYGIV) and Lys72. Asp169 serves as the catalytic Proton acceptor. Thr201 carries the post-translational modification Phosphothreonine. The TXY signature appears at 201–203 (TEY). Tyr203 is modified (phosphotyrosine). Residue Thr206 is modified to Phosphothreonine.

This sequence belongs to the protein kinase superfamily. CMGC Ser/Thr protein kinase family. MAP kinase subfamily. The cofactor is Mg(2+). Post-translationally, activated by wounding and UV-C in a cultivar-dependent manner; phosphorylated in cv. Pungchon but not in cv. Subicho.

The catalysed reaction is L-seryl-[protein] + ATP = O-phospho-L-seryl-[protein] + ADP + H(+). It carries out the reaction L-threonyl-[protein] + ATP = O-phospho-L-threonyl-[protein] + ADP + H(+). Activated by threonine and tyrosine phosphorylation. Its function is as follows. Stress-inducible protein kinase involved in oxidative stress-mediated and innate immune MAP kinase signaling cascades. This is Mitogen-activated protein kinase 1 from Capsicum annuum (Capsicum pepper).